A 182-amino-acid polypeptide reads, in one-letter code: MSVIAGEIVEPYAAALMSLAQSKDLTDKFAEDVRSLINILDESPEFKQFVGNPVIKQEDKKAVVKRMLGEQVDPLMRNFLMLLIDKGRITFLEQIGKQYLALLRELNQTVLAEVTSTVELNENQKNTIRERVKSMTSAREVEIETKVDPSILGGVIIKIGSQIIDSSLQGQLRRIGISLKTL.

This sequence belongs to the ATPase delta chain family. As to quaternary structure, F-type ATPases have 2 components, F(1) - the catalytic core - and F(0) - the membrane proton channel. F(1) has five subunits: alpha(3), beta(3), gamma(1), delta(1), epsilon(1). CF(0) has four main subunits: a(1), b(1), b'(1) and c(10-14). The alpha and beta chains form an alternating ring which encloses part of the gamma chain. F(1) is attached to F(0) by a central stalk formed by the gamma and epsilon chains, while a peripheral stalk is formed by the delta, b and b' chains.

It is found in the cellular thylakoid membrane. Functionally, f(1)F(0) ATP synthase produces ATP from ADP in the presence of a proton or sodium gradient. F-type ATPases consist of two structural domains, F(1) containing the extramembraneous catalytic core and F(0) containing the membrane proton channel, linked together by a central stalk and a peripheral stalk. During catalysis, ATP synthesis in the catalytic domain of F(1) is coupled via a rotary mechanism of the central stalk subunits to proton translocation. In terms of biological role, this protein is part of the stalk that links CF(0) to CF(1). It either transmits conformational changes from CF(0) to CF(1) or is implicated in proton conduction. The polypeptide is ATP synthase subunit delta (Trichodesmium erythraeum (strain IMS101)).